Reading from the N-terminus, the 222-residue chain is UPF0502 protein Shewmr4_1554 (222 aa).

The span at 175-193 (SLSADSPSAGSNSLNAQDR) shows a compositional bias: polar residues. The disordered stretch occupies residues 175–194 (SLSADSPSAGSNSLNAQDRQ).

Belongs to the UPF0502 family.

The protein is UPF0502 protein Shewmr4_1554 of Shewanella sp. (strain MR-4).